Consider the following 158-residue polypeptide: Protein SREK1IP1 (158 aa).

2 disordered regions span residues 1–20 (MAAPGPNKDNIRAGCKRCGY) and 45–158 (SSTS…SDTD). The CCHC-type zinc-finger motif lies at 13 to 30 (AGCKRCGYPGHLTFECRN). Positions 59–79 (ALSKEKIFGSHSKGSQEDSRK) are enriched in basic and acidic residues. Composition is skewed to basic residues over residues 80–98 (EKHKKKSKERSRGKAKKRS) and 111–140 (KKKKKRKSNKKKGKKEKREKERKHKKKQKK). Residues 145–158 (SSSSDSSSESSDTD) show a composition bias toward low complexity.

In terms of biological role, possible splicing regulator involved in the control of cellular survival. This chain is Protein SREK1IP1 (srek1ip1), found in Danio rerio (Zebrafish).